Consider the following 97-residue polypeptide: Secreted RxLR effector protein BLR05 (97 aa).

A signal peptide spans 1–21 (MGPQHLLALVVVSILVAAGNA). The short motif at 32 to 60 (RALRPSVIADQEHAVHAIPATNFISKDED) is the RxLR-dEER element. Residues 69–89 (IEIIRIAIFSLLVVGVFAIMA) traverse the membrane as a helical segment.

Belongs to the RxLR effector family. In terms of assembly, interacts with host transcription factor NAC069.

It localises to the secreted. Its subcellular location is the host endoplasmic reticulum membrane. Secreted effector that inhibits stress-induced relocalization of the transcription factor NAC069 to the nucleus, thus affecting its broad role in abiotic and biotic stress responses. The polypeptide is Secreted RxLR effector protein BLR05 (Bremia lactucae (Lettuce downy mildew)).